Reading from the N-terminus, the 777-residue chain is Santalene and bergamotene synthase, chloroplastic (777 aa).

The transit peptide at 1–36 (MIVGYRSTIITLSHPKLGNGKTISSNAIFQRSCRVR) directs the protein to the chloroplast. The Mg(2+) site is built by Asp-530 and Asp-534. The DDXXD motif motif lies at 530 to 534 (DDQFD).

It belongs to the terpene synthase family. Tpse subfamily. Mg(2+) serves as cofactor. The cofactor is Mn(2+).

The protein resides in the plastid. It is found in the chloroplast. It catalyses the reaction (2Z,6Z)-farnesyl diphosphate = (+)-alpha-santalene + diphosphate. It carries out the reaction (2Z,6Z)-farnesyl diphosphate = (+)-endo-beta-bergamotene + diphosphate. The catalysed reaction is (2Z,6Z)-farnesyl diphosphate = (1S,5S,6S)-alpha-bergamotene + diphosphate. (2Z,6Z)-farnesyl diphosphate cyclizing enzyme. Produces (+)-alpha-santalene, (+)-endo-beta-bergamotene, (-)-endo-alpha-bergamotene, and at lower amounts, (-)exo-alpha-bergamotene and (+)-epi-beta-santalene. Not able to use geranyl diphosphate, E,E-farnesyl diphosphate or E,E,E-geranylgeranyl diphosphate as substrates, but able to use Neryl diphosphate to make the monoterpene terpineol. This chain is Santalene and bergamotene synthase, chloroplastic (SBS), found in Solanum habrochaites (Wild tomato).